The primary structure comprises 380 residues: Homoserine O-acetyltransferase (380 aa).

An AB hydrolase-1 domain is found at 70–366; that stretch reads NAVLVFHALT…SPHGHDAFLI (297 aa). Residue serine 186 is the Nucleophile of the active site. Arginine 250 is a substrate binding site. Active-site residues include aspartate 333 and histidine 361. Aspartate 362 is a binding site for substrate.

The protein belongs to the AB hydrolase superfamily. MetX family. Homodimer.

It is found in the cytoplasm. The catalysed reaction is L-homoserine + acetyl-CoA = O-acetyl-L-homoserine + CoA. The protein operates within amino-acid biosynthesis; L-methionine biosynthesis via de novo pathway; O-acetyl-L-homoserine from L-homoserine: step 1/1. Its function is as follows. Transfers an acetyl group from acetyl-CoA to L-homoserine, forming acetyl-L-homoserine. In Thermus thermophilus (strain ATCC 27634 / DSM 579 / HB8), this protein is Homoserine O-acetyltransferase.